Reading from the N-terminus, the 193-residue chain is MGISQQAASQHLRELEDEGLITRNAEGKGISVMVTDKGRHELLRVYNILHDSLHSRPDHVEITGTLVSGMNEGAYYMSREGYTGQFQERLGYVPFPGTLNVDTDRKHGPEIARLDGMNGTIIDGFTDGKRSYGWVKCFAGTLNGTIPCHLIRLERTHHGSSTVELISKLDIRKETGLDDGGKITIRIPLEQED.

The tract at residues 1–59 (MGISQQAASQHLRELEDEGLITRNAEGKGISVMVTDKGRHELLRVYNILHDSLHSRPDH) is H-T-H motif-like. The tract at residues 60 to 193 (VEITGTLVSG…TIRIPLEQED (134 aa)) is riboflavin kinase. CDP is bound at residue 69-74 (GMNEGA). Residues Thr-98 and Asn-100 each coordinate Mg(2+). 2 residues coordinate FMN: Thr-156 and Glu-164. CDP is bound at residue 169 to 172 (LDIR).

This sequence belongs to the archaeal riboflavin kinase family. It depends on Mg(2+) as a cofactor.

It carries out the reaction riboflavin + CTP = CDP + FMN + H(+). It functions in the pathway cofactor biosynthesis; FMN biosynthesis; FMN from riboflavin (CTP route): step 1/1. Its function is as follows. Catalyzes the CTP-dependent phosphorylation of riboflavin (vitamin B2) to form flavin mononucleotide (FMN). This is Riboflavin kinase (ribK) from Cenarchaeum symbiosum (strain A).